We begin with the raw amino-acid sequence, 246 residues long: Pyridoxine 5'-phosphate synthase (246 aa).

Asparagine 12 serves as a coordination point for 3-amino-2-oxopropyl phosphate. 14-15 lines the 1-deoxy-D-xylulose 5-phosphate pocket; sequence DH. 3-amino-2-oxopropyl phosphate is bound at residue arginine 23. Histidine 48 acts as the Proton acceptor in catalysis. 1-deoxy-D-xylulose 5-phosphate is bound by residues arginine 50 and histidine 55. Glutamate 75 functions as the Proton acceptor in the catalytic mechanism. Threonine 105 contributes to the 1-deoxy-D-xylulose 5-phosphate binding site. Catalysis depends on histidine 196, which acts as the Proton donor. 3-amino-2-oxopropyl phosphate contacts are provided by residues glycine 197 and 218-219; that span reads GH.

This sequence belongs to the PNP synthase family. As to quaternary structure, homooctamer; tetramer of dimers.

The protein resides in the cytoplasm. The catalysed reaction is 3-amino-2-oxopropyl phosphate + 1-deoxy-D-xylulose 5-phosphate = pyridoxine 5'-phosphate + phosphate + 2 H2O + H(+). The protein operates within cofactor biosynthesis; pyridoxine 5'-phosphate biosynthesis; pyridoxine 5'-phosphate from D-erythrose 4-phosphate: step 5/5. Catalyzes the complicated ring closure reaction between the two acyclic compounds 1-deoxy-D-xylulose-5-phosphate (DXP) and 3-amino-2-oxopropyl phosphate (1-amino-acetone-3-phosphate or AAP) to form pyridoxine 5'-phosphate (PNP) and inorganic phosphate. The polypeptide is Pyridoxine 5'-phosphate synthase (Pseudomonas putida (strain W619)).